The primary structure comprises 650 residues: SPARC-like protein 1 (650 aa).

Positions 1-16 are cleaved as a signal peptide; it reads MKAVLLLLCALGTAVA. The segment at 51-352 is disordered; it reads TADIENHPSD…HGAGDDYFIP (302 aa). The segment covering 54 to 64 has biased composition (basic and acidic residues); sequence IENHPSDKAEK. Phosphoserine occurs at positions 70, 78, and 86. The span at 75–85 shows a compositional bias: basic and acidic residues; it reads HEQSTEQDKTY. The span at 91–101 shows a compositional bias: acidic residues; it reads LKDEEDGDGDL. Polar residues-rich tracts occupy residues 116 to 126 and 135 to 148; these read EGTSEPQQKSL and TVST…QRAN. Asparagine 148 carries an N-linked (GlcNAc...) asparagine glycan. Phosphoserine occurs at positions 155 and 163. The span at 157 to 174 shows a compositional bias: polar residues; the sequence is EQPVSDSHQQPNESSKQT. Asparagine 168 carries N-linked (GlcNAc...) asparagine glycosylation. The segment covering 189 to 210 has biased composition (acidic residues); sequence IPNEEEEEEEDEEEEEEEEPED. Serine 272 carries the phosphoserine modification. Basic and acidic residues predominate over residues 277-299; the sequence is EDKAAGSKEHIPHTEQQDQEGKA. Serine 353 carries the post-translational modification Phosphoserine. Residues 375–415 are disordered; it reads EETTTGESENRREAADNQEAKKAESSPNAEPSDEGNSREHS. A compositionally biased stretch (basic and acidic residues) spans 382–398; it reads SENRREAADNQEAKKAE. Serine 406 carries the post-translational modification Phosphoserine. The region spanning 418–440 is the Follistatin-like domain; the sequence is SCTNFQCKRGHICKTDPQGKPHC. 7 disulfides stabilise this stretch: cysteine 419–cysteine 430, cysteine 424–cysteine 440, cysteine 442–cysteine 476, cysteine 448–cysteine 469, cysteine 458–cysteine 495, cysteine 501–cysteine 612, and cysteine 620–cysteine 636. The 62-residue stretch at 436 to 497 folds into the Kazal-like domain; that stretch reads GKPHCVCQDP…QLDYFGACKS (62 aa). Residue asparagine 462 is glycosylated (N-linked (GlcNAc...) asparagine). The 36-residue stretch at 608–643 folds into the EF-hand domain; it reads PMEHCITRFFEECDPNKDKHITLKEWGHCFGIKEED. Ca(2+) contacts are provided by aspartate 621, asparagine 623, aspartate 625, histidine 627, and glutamate 632.

The protein belongs to the SPARC family. Highest expression in brain. Moderate levels in heart, adrenal gland, epididymis and lung. Low levels in kidney, eye, liver, spleen, submandibular gland and testis.

The protein localises to the secreted. The protein resides in the extracellular space. It localises to the extracellular matrix. The sequence is that of SPARC-like protein 1 (Sparcl1) from Mus musculus (Mouse).